We begin with the raw amino-acid sequence, 100 residues long: Large ribosomal subunit protein uL23 (100 aa).

This sequence belongs to the universal ribosomal protein uL23 family. As to quaternary structure, part of the 50S ribosomal subunit. Contacts protein L29, and trigger factor when it is bound to the ribosome.

One of the early assembly proteins it binds 23S rRNA. One of the proteins that surrounds the polypeptide exit tunnel on the outside of the ribosome. Forms the main docking site for trigger factor binding to the ribosome. This is Large ribosomal subunit protein uL23 from Mycolicibacterium smegmatis (strain ATCC 700084 / mc(2)155) (Mycobacterium smegmatis).